Reading from the N-terminus, the 36-residue chain is Lambda-hexatoxin-Hv1b (36 aa).

4 cysteine pairs are disulfide-bonded: Cys3–Cys17, Cys10–Cys22, Cys13–Cys14, and Cys16–Cys33.

It belongs to the neurotoxin 11 (kappa toxin) family. In terms of tissue distribution, expressed by the venom gland.

The protein localises to the secreted. In terms of biological role, this excitatory toxin inhibits insect calcium-activated potassium (KCa) channels (Slo-type). The polypeptide is Lambda-hexatoxin-Hv1b (Hadronyche versuta (Blue mountains funnel-web spider)).